A 205-amino-acid chain; its full sequence is Recombination protein RecR (205 aa).

The C4-type zinc finger occupies 59-74 (CARCNTFCEGGLCDIC). Residues 82–177 (RRLMVVHMPA…KVSRLSQGIP (96 aa)) enclose the Toprim domain.

It belongs to the RecR family.

In terms of biological role, may play a role in DNA repair. It seems to be involved in an RecBC-independent recombinational process of DNA repair. It may act with RecF and RecO. This chain is Recombination protein RecR, found in Neisseria gonorrhoeae (strain ATCC 700825 / FA 1090).